Here is a 90-residue protein sequence, read N- to C-terminus: UPF0329 protein ECU04_1650 (90 aa).

It belongs to the UPF0329 family.

The protein is UPF0329 protein ECU04_1650 of Encephalitozoon cuniculi (strain GB-M1) (Microsporidian parasite).